Consider the following 149-residue polypeptide: Nucleoside diphosphate kinase (149 aa).

Residues Lys-9, Phe-57, Arg-85, Thr-91, Arg-102, and Asn-112 each coordinate ATP. Catalysis depends on His-115, which acts as the Pros-phosphohistidine intermediate.

It belongs to the NDK family. As to quaternary structure, homotetramer. Requires Mg(2+) as cofactor.

The protein resides in the cytoplasm. It carries out the reaction dZDP + ATP = dZTP + ADP. The catalysed reaction is a 2'-deoxyribonucleoside 5'-diphosphate + ATP = a 2'-deoxyribonucleoside 5'-triphosphate + ADP. It catalyses the reaction a ribonucleoside 5'-diphosphate + ATP = a ribonucleoside 5'-triphosphate + ADP. It participates in purine metabolism. In terms of biological role, major role in the synthesis of nucleoside triphosphates other than ATP. The ATP gamma phosphate is transferred to the NDP beta phosphate via a ping-pong mechanism, using a phosphorylated active-site intermediate. (Microbial infection) Catalyzes the phosphorylation of dZDP to dZTP, when the bacterium is infected by a phage that produces the substrate for the synthesis of dZTP (2- amino-2'-deoxyadenosine 5'-triphosphate), which is then used by the phage as a DNA polymerase substrate. This chain is Nucleoside diphosphate kinase, found in Synechococcus elongatus (strain ATCC 33912 / PCC 7942 / FACHB-805) (Anacystis nidulans R2).